The primary structure comprises 1946 residues: Chromodomain-helicase-DNA-binding protein 5 (1946 aa).

3 disordered regions span residues 1-140 (MRGP…SGQL), 236-272 (VPQTLPIRKAKTKEGKGPGVRKKNKGAKDSKKKGRGK), and 285-340 (SKRK…GDGY). Acidic residues-rich tracts occupy residues 17–37 (EEMENEEEMSEEEDGGLEGFE) and 72–90 (NDEMSDNEEDLEEKSESEG). 2 stretches are compositionally biased toward basic residues: residues 96 to 118 (TKKKKKKLKEKKEKKEKKEKRKK) and 254 to 272 (GVRKKNKGAKDSKKKGRGK). Over residues 293 to 303 (SEEDEREDSDL) the composition is skewed to acidic residues. Residues 323-332 (KKNKRRRKKK) are compositionally biased toward basic residues. 2 consecutive PHD-type zinc fingers follow at residues 345–392 (QDYC…CEKE) and 418–465 (MEFC…CTCP). A histone-binding region spans residues 345–655 (QDYCEVCQQG…HRELMLGEDA (311 aa)). The Chromo 1 domain occupies 499-556 (MPPPRPLEGIPEREFFVKWAGLSYWHCSWVKELQLELYHTVMYRNYQRKNDMDEPPPF). Residues 551–573 (DEPPPFDYGSGDEDGKSEKRKNK) form a disordered region. Positions 563–573 (EDGKSEKRKNK) are enriched in basic and acidic residues. Positions 594 to 655 (MMVHRILNHS…HRELMLGEDA (62 aa)) constitute a Chromo 2 domain. Residues 714 to 898 (RFSWAQGTDT…FHLLNFLTPE (185 aa)) enclose the Helicase ATP-binding domain. Position 727–734 (727–734 (DEMGLGKT)) interacts with ATP. Positions 849-852 (DEAH) match the DEAH box motif. Residues 1030 to 1195 (LLQKMLKKLR…MTKQELDDIL (166 aa)) form the Helicase C-terminal domain. Disordered regions lie at residues 1210–1254 (MMSQ…VEDS), 1353–1413 (YNDA…LPPL), 1525–1566 (KYST…APLG), 1579–1696 (DEKE…EDKN), and 1926–1946 (SFPAEPSHLPNPRGREKLQPF). The segment covering 1212–1230 (SQGQRPTTPIPDIQSTKGG) has biased composition (polar residues). Composition is skewed to acidic residues over residues 1357-1368 (SQEDQEWQDELS) and 1378-1387 (SEDEDEDFEE). Gln-1392 is subject to N5-methylglutamine. Over residues 1551–1564 (TPVPASPAQLPPAP) the composition is skewed to pro residues. Ser-1556 carries the post-translational modification Phosphoserine. Composition is skewed to basic and acidic residues over residues 1602-1629 (DRVEGEDKHQSSDSKDRAREERTEEVEK), 1637-1654 (PLKEEVLPDKEPIPDKPE), and 1661-1676 (GDFRPDDPKTEEKEPG).

This sequence belongs to the SNF2/RAD54 helicase family. Component of the nucleosome remodeling and deacetylase (NuRD) repressor complex, composed of core proteins MTA1, MTA2, MTA3, RBBP4, RBBP7, HDAC1, HDAC2, MBD2, MBD3, and peripherally associated proteins CDK2AP1, CDK2AP2, GATAD2A, GATAD2B, CHD3, CHD4 and CHD5. The exact stoichiometry of the NuRD complex is unknown, and some subunits such as MBD2 and MBD3, GATAD2A and GATAD2B, and CHD3, CHD4 and CHD5 define mutually exclusive NuRD complexes. Interacts with HDAC2. Post-translationally, methylated at Gln-1392 by N6AMT1. In terms of tissue distribution, specifically expressed by neurons in brain, retina and adrenal gland (at protein level). Also detected in testis.

The protein localises to the nucleus. It localises to the chromosome. The enzyme catalyses ATP + H2O = ADP + phosphate + H(+). In terms of biological role, ATP-dependent chromatin-remodeling factor that binds DNA through histones and regulates gene transcription. May specifically recognize and bind trimethylated 'Lys-27' (H3K27me3) and non-methylated 'Lys-4' of histone H3. Acts as a component of the histone deacetylase NuRD complex which participates in the remodeling of chromatin. Plays a role in the development of the nervous system by activating the expression of genes promoting neuron terminal differentiation. In parallel, it may also positively regulate the trimethylation of histone H3 at 'Lys-27' thereby specifically repressing genes that promote the differentiation into non-neuronal cell lineages. Regulates the expression of genes involved in cell proliferation and differentiation. Downstream activated genes may include CDKN2A that positively regulates the p53/TP53 pathway, which in turn, prevents cell proliferation. In spermatogenesis, it probably regulates histone hyperacetylation and the replacement of histones by transition proteins in chromatin, a crucial step in the condensation of spermatid chromatin and the production of functional spermatozoa. The sequence is that of Chromodomain-helicase-DNA-binding protein 5 (Chd5) from Mus musculus (Mouse).